The following is a 1508-amino-acid chain: ABC-type transporter oblD (1508 aa).

Disordered regions lie at residues M1–N35 and K54–G82. The span at T11–N24 shows a compositional bias: polar residues. N-linked (GlcNAc...) asparagine glycans are attached at residues N24 and N35. Residues Y55–P68 show a composition bias toward polar residues. N-linked (GlcNAc...) asparagine glycans are attached at residues N83, N231, and N314. Positions L136 to D390 constitute an ABC transporter 1 domain. 5 helical membrane passes run I501–F521, L536–Y556, G610–F630, A643–P663, and G752–I772. The ABC transporter 2 domain occupies F828–G1070. G864–T871 provides a ligand contact to ATP. A run of 4 helical transmembrane segments spans residues Y1172–Y1192, F1206–F1226, L1296–L1316, and A1322–T1342. An N-linked (GlcNAc...) asparagine glycan is attached at N1390. A helical transmembrane segment spans residues F1443–W1463.

This sequence belongs to the ABC transporter superfamily. ABCG family. PDR (TC 3.A.1.205) subfamily.

The protein resides in the cell membrane. Its function is as follows. ABC-type transporter; part of the gene cluster that mediates the biosynthesis of the sesterterpenes ophiobolins, fungal phytotoxins with potential anti-cancer activities. Acts as a specific transporter involved in ophiobolins secretion. This is ABC-type transporter oblD from Cochliobolus heterostrophus (strain C5 / ATCC 48332 / race O) (Southern corn leaf blight fungus).